Consider the following 178-residue polypeptide: MFASRPAVHPVEAPPPPDPAEQPRGVLMKDLPGMPGTAGGLGLRLAQFAFAAVALAVMASTNDFPSVTSFCFLVAAAILQCLWSFSLAIVDIYALLVKRCLRNRRAVCLFAIGDGITAALTFSAACASSGITVLIDNDLDLCSENHCASFESATAMAFLSWFALSPSFLLNFWSMASG.

A compositionally biased stretch (low complexity) spans 1–11 (MFASRPAVHPV). The interval 1 to 25 (MFASRPAVHPVEAPPPPDPAEQPRG) is disordered. The Cytoplasmic portion of the chain corresponds to 1–37 (MFASRPAVHPVEAPPPPDPAEQPRGVLMKDLPGMPGT). The helical transmembrane segment at 38–58 (AGGLGLRLAQFAFAAVALAVM) threads the bilayer. Topologically, residues 59-69 (ASTNDFPSVTS) are extracellular. Residues 70 to 90 (FCFLVAAAILQCLWSFSLAIV) form a helical membrane-spanning segment. The Cytoplasmic portion of the chain corresponds to 91–105 (DIYALLVKRCLRNRR). Residues 106 to 126 (AVCLFAIGDGITAALTFSAAC) form a helical membrane-spanning segment. The Extracellular portion of the chain corresponds to 127–152 (ASSGITVLIDNDLDLCSENHCASFES). A helical membrane pass occupies residues 153–173 (ATAMAFLSWFALSPSFLLNFW). Residues 174–178 (SMASG) lie on the Cytoplasmic side of the membrane.

Belongs to the Casparian strip membrane proteins (CASP) family. In terms of assembly, homodimer and heterodimers.

It is found in the cell membrane. This Oryza sativa subsp. japonica (Rice) protein is CASP-like protein 5A1.